The chain runs to 95 residues: Co-chaperonin GroES (95 aa).

Belongs to the GroES chaperonin family. As to quaternary structure, heptamer of 7 subunits arranged in a ring. Interacts with the chaperonin GroEL.

Its subcellular location is the cytoplasm. Functionally, together with the chaperonin GroEL, plays an essential role in assisting protein folding. The GroEL-GroES system forms a nano-cage that allows encapsulation of the non-native substrate proteins and provides a physical environment optimized to promote and accelerate protein folding. GroES binds to the apical surface of the GroEL ring, thereby capping the opening of the GroEL channel. This is Co-chaperonin GroES from Stenotrophomonas maltophilia (strain K279a).